Here is a 551-residue protein sequence, read N- to C-terminus: Formate--tetrahydrofolate ligase (551 aa).

Position 61–68 (61–68 (TPAGEGKS)) interacts with ATP.

This sequence belongs to the formate--tetrahydrofolate ligase family.

The enzyme catalyses (6S)-5,6,7,8-tetrahydrofolate + formate + ATP = (6R)-10-formyltetrahydrofolate + ADP + phosphate. It functions in the pathway one-carbon metabolism; tetrahydrofolate interconversion. This is Formate--tetrahydrofolate ligase from Lactiplantibacillus plantarum (strain ATCC BAA-793 / NCIMB 8826 / WCFS1) (Lactobacillus plantarum).